A 176-amino-acid chain; its full sequence is HTH-type transcriptional regulator DctR (176 aa).

The region spanning 109–174 (VPEADVSLSR…ELVRHQHINY (66 aa)) is the HTH luxR-type domain. Residues 133–152 (TEDILEKLKISLKTFYCHKH) constitute a DNA-binding region (H-T-H motif).

Its function is as follows. May act as a transcriptional regulator of dctA. This is HTH-type transcriptional regulator DctR (dctR) from Escherichia coli O6:H1 (strain CFT073 / ATCC 700928 / UPEC).